The chain runs to 366 residues: GDSL esterase/lipase At1g74460 (366 aa).

Positions 1-20 (MKFCAIFVLFIVLAINGYDC) are cleaved as a signal peptide. Catalysis depends on Ser30, which acts as the Nucleophile. Asn113 and Asn260 each carry an N-linked (GlcNAc...) asparagine glycan. Residues Asp320 and His323 contribute to the active site.

The protein belongs to the 'GDSL' lipolytic enzyme family.

Its subcellular location is the secreted. The protein is GDSL esterase/lipase At1g74460 of Arabidopsis thaliana (Mouse-ear cress).